The following is a 296-amino-acid chain: Phosphatidylglycerol--prolipoprotein diacylglyceryl transferase (296 aa).

The tract at residues 1 to 21 is disordered; that stretch reads MRHRRRPGGRSTAGGTPVSQL. 7 consecutive transmembrane segments (helical) span residues 34–54, 72–92, 108–128, 136–158, 195–215, 227–243, and 258–278; these read GPLT…VAYI, ELCA…HVIT, FFIW…GLAI, GIRF…AIGR, FHPT…FLLW, LFTL…FWVE, and LNDV…IVLQ. Arginine 158 contributes to the a 1,2-diacyl-sn-glycero-3-phospho-(1'-sn-glycerol) binding site.

The protein belongs to the Lgt family.

Its subcellular location is the cell membrane. It carries out the reaction L-cysteinyl-[prolipoprotein] + a 1,2-diacyl-sn-glycero-3-phospho-(1'-sn-glycerol) = an S-1,2-diacyl-sn-glyceryl-L-cysteinyl-[prolipoprotein] + sn-glycerol 1-phosphate + H(+). It participates in protein modification; lipoprotein biosynthesis (diacylglyceryl transfer). In terms of biological role, catalyzes the transfer of the diacylglyceryl group from phosphatidylglycerol to the sulfhydryl group of the N-terminal cysteine of a prolipoprotein, the first step in the formation of mature lipoproteins. The sequence is that of Phosphatidylglycerol--prolipoprotein diacylglyceryl transferase from Cutibacterium acnes (strain DSM 16379 / KPA171202) (Propionibacterium acnes).